The sequence spans 431 residues: Glutamate--tRNA ligase 1 (431 aa).

A 'HIGH' region motif is present at residues 6–16 (PSPTGDMHIGN). A 'KMSKS' region motif is present at residues 235 to 239 (KMSKR). Lys238 lines the ATP pocket.

This sequence belongs to the class-I aminoacyl-tRNA synthetase family. Glutamate--tRNA ligase type 1 subfamily. As to quaternary structure, monomer.

It is found in the cytoplasm. It carries out the reaction tRNA(Glu) + L-glutamate + ATP = L-glutamyl-tRNA(Glu) + AMP + diphosphate. Catalyzes the attachment of glutamate to tRNA(Glu) in a two-step reaction: glutamate is first activated by ATP to form Glu-AMP and then transferred to the acceptor end of tRNA(Glu). The chain is Glutamate--tRNA ligase 1 from Campylobacter curvus (strain 525.92).